We begin with the raw amino-acid sequence, 238 residues long: Phosphoribosylaminoimidazole-succinocarboxamide synthase (238 aa).

It belongs to the SAICAR synthetase family.

The catalysed reaction is 5-amino-1-(5-phospho-D-ribosyl)imidazole-4-carboxylate + L-aspartate + ATP = (2S)-2-[5-amino-1-(5-phospho-beta-D-ribosyl)imidazole-4-carboxamido]succinate + ADP + phosphate + 2 H(+). The protein operates within purine metabolism; IMP biosynthesis via de novo pathway; 5-amino-1-(5-phospho-D-ribosyl)imidazole-4-carboxamide from 5-amino-1-(5-phospho-D-ribosyl)imidazole-4-carboxylate: step 1/2. In Alcanivorax borkumensis (strain ATCC 700651 / DSM 11573 / NCIMB 13689 / SK2), this protein is Phosphoribosylaminoimidazole-succinocarboxamide synthase.